A 317-amino-acid chain; its full sequence is Nuclear distribution protein nudE homolog (317 aa).

Residues 29 to 180 (TDVKQEYDEF…LKQELNVKSR (152 aa)) adopt a coiled-coil conformation. The tract at residues 186 to 205 (NGTSVPTANDTNTVNSSMNS) is disordered.

It belongs to the nudE family.

The protein resides in the cytoplasm. It localises to the cytoskeleton. The protein localises to the microtubule organizing center. Its subcellular location is the centrosome. It is found in the spindle. Its function is as follows. Chaperone protein with functions in nuclear localization. Required for centrosome duplication and formation and function of the mitotic spindle. In postmitotic neurons, acts with nudC downstream of dar1 to ensure correct positioning of the nuclei in primary dendrites and as a consequence, is required for determining multipolar neuron morphology. The sequence is that of Nuclear distribution protein nudE homolog from Drosophila melanogaster (Fruit fly).